A 194-amino-acid chain; its full sequence is Lysozyme g (194 aa).

Residues glutamate 71 and aspartate 84 contribute to the active site.

Belongs to the glycosyl hydrolase 23 family. In terms of tissue distribution, expressed in intestine, liver, spleen, anterior kidney, posterior kidney, heart, gill, muscle and leukocytes.

It catalyses the reaction Hydrolysis of (1-&gt;4)-beta-linkages between N-acetylmuramic acid and N-acetyl-D-glucosamine residues in a peptidoglycan and between N-acetyl-D-glucosamine residues in chitodextrins.. Functionally, has lytic activity against M.lysodeikticus, V.alginolyticus from Epinephelus fario, V.vulnificus from culture water, A.hydrophila from soft-shell turtle, A.hydrophila from goldfish and V.parahaemolyticus, P.fluorescens and V.fluvialis from culture water. This chain is Lysozyme g, found in Epinephelus coioides (Orange-spotted grouper).